Reading from the N-terminus, the 310-residue chain is MAATGANAEKAESHNDCPVRLLNPNIAKMKEDILYHFNLTTSRHNFPALFGDVKFVCVGGSPSRMKAFIRCVGAELGLDCPGRDYPNICAGTDRYAMYKVGPVLSVSHGMGIPSISIMLHELIKLLYYARCSNVTIIRIGTSGGIGLEPGTVVITEQAVDTCFKAEFEQIVLGKRVIRKTDLNKKLVQELLLCSAELSEFTTVVGNTMCTLDFYEGQGRLDGALCSYTEKDKQAYLEAAYAAGVRNIEMESSVFAAMCSACGLQAAVVCVTLLNRLEGDQISSPRNVLSEYQQRPQRLVSYFIKKKLSKA.

Phosphate contacts are provided by residues glycine 60, arginine 94, and 138–141; that span reads RIGT. Uridine is bound by residues 142 to 143 and 217 to 219; these read SG and QGR.

It belongs to the PNP/UDP phosphorylase family. In terms of assembly, homodimer.

The enzyme catalyses uridine + phosphate = alpha-D-ribose 1-phosphate + uracil. The catalysed reaction is 2'-deoxyuridine + phosphate = 2-deoxy-alpha-D-ribose 1-phosphate + uracil. It participates in pyrimidine metabolism; UMP biosynthesis via salvage pathway; uracil from uridine (phosphorylase route): step 1/1. Catalyzes the reversible phosphorylytic cleavage of uridine to uracil and ribose-1-phosphate which can then be utilized as carbon and energy sources or in the rescue of pyrimidine bases for nucleotide synthesis. Shows broad substrate specificity and can also accept deoxyuridine and other analogous compounds. This is Uridine phosphorylase 1 from Homo sapiens (Human).